We begin with the raw amino-acid sequence, 445 residues long: Exodeoxyribonuclease 7 large subunit (445 aa).

This sequence belongs to the XseA family. In terms of assembly, heterooligomer composed of large and small subunits.

It localises to the cytoplasm. The catalysed reaction is Exonucleolytic cleavage in either 5'- to 3'- or 3'- to 5'-direction to yield nucleoside 5'-phosphates.. Bidirectionally degrades single-stranded DNA into large acid-insoluble oligonucleotides, which are then degraded further into small acid-soluble oligonucleotides. In Staphylococcus aureus (strain USA300 / TCH1516), this protein is Exodeoxyribonuclease 7 large subunit.